Reading from the N-terminus, the 311-residue chain is Probable manganese-dependent inorganic pyrophosphatase (311 aa).

Mn(2+)-binding residues include His-9, Asp-13, Asp-15, Asp-77, His-99, and Asp-151.

The protein belongs to the PPase class C family. Requires Mn(2+) as cofactor.

It is found in the cytoplasm. The catalysed reaction is diphosphate + H2O = 2 phosphate + H(+). This Streptococcus pneumoniae (strain JJA) protein is Probable manganese-dependent inorganic pyrophosphatase.